The chain runs to 311 residues: Pyrimidine-specific ribonucleoside hydrolase RihA (311 aa).

His-240 is a catalytic residue.

Belongs to the IUNH family. RihA subfamily.

In terms of biological role, hydrolyzes cytidine or uridine to ribose and cytosine or uracil, respectively. In Salmonella paratyphi A (strain ATCC 9150 / SARB42), this protein is Pyrimidine-specific ribonucleoside hydrolase RihA.